We begin with the raw amino-acid sequence, 271 residues long: Tryptophan synthase alpha chain (271 aa).

Residues Glu49 and Asp60 each act as proton acceptor in the active site.

This sequence belongs to the TrpA family. In terms of assembly, tetramer of two alpha and two beta chains.

It catalyses the reaction (1S,2R)-1-C-(indol-3-yl)glycerol 3-phosphate + L-serine = D-glyceraldehyde 3-phosphate + L-tryptophan + H2O. It functions in the pathway amino-acid biosynthesis; L-tryptophan biosynthesis; L-tryptophan from chorismate: step 5/5. In terms of biological role, the alpha subunit is responsible for the aldol cleavage of indoleglycerol phosphate to indole and glyceraldehyde 3-phosphate. The chain is Tryptophan synthase alpha chain from Burkholderia lata (strain ATCC 17760 / DSM 23089 / LMG 22485 / NCIMB 9086 / R18194 / 383).